We begin with the raw amino-acid sequence, 339 residues long: Glycerol-3-phosphate dehydrogenase [NAD(P)+] (339 aa).

NADPH is bound by residues serine 15, tyrosine 16, histidine 36, and lysine 110. Sn-glycerol 3-phosphate-binding residues include lysine 110, glycine 139, and threonine 141. Alanine 143 contacts NADPH. The sn-glycerol 3-phosphate site is built by lysine 195, aspartate 248, serine 258, arginine 259, and asparagine 260. Catalysis depends on lysine 195, which acts as the Proton acceptor. Residue arginine 259 coordinates NADPH. Residues valine 283 and glutamate 285 each coordinate NADPH.

It belongs to the NAD-dependent glycerol-3-phosphate dehydrogenase family.

The protein resides in the cytoplasm. The catalysed reaction is sn-glycerol 3-phosphate + NAD(+) = dihydroxyacetone phosphate + NADH + H(+). It catalyses the reaction sn-glycerol 3-phosphate + NADP(+) = dihydroxyacetone phosphate + NADPH + H(+). It functions in the pathway membrane lipid metabolism; glycerophospholipid metabolism. Catalyzes the reduction of the glycolytic intermediate dihydroxyacetone phosphate (DHAP) to sn-glycerol 3-phosphate (G3P), the key precursor for phospholipid synthesis. The chain is Glycerol-3-phosphate dehydrogenase [NAD(P)+] from Salmonella agona (strain SL483).